We begin with the raw amino-acid sequence, 426 residues long: Putative nickel insertion protein (426 aa).

It belongs to the LarC family.

This is Putative nickel insertion protein from Nostoc sp. (strain PCC 7120 / SAG 25.82 / UTEX 2576).